The sequence spans 194 residues: Peptidyl-tRNA hydrolase (194 aa).

TRNA is bound at residue Tyr17. Residue His22 is the Proton acceptor of the active site. Positions 68, 70, and 116 each coordinate tRNA.

This sequence belongs to the PTH family. In terms of assembly, monomer.

It is found in the cytoplasm. The enzyme catalyses an N-acyl-L-alpha-aminoacyl-tRNA + H2O = an N-acyl-L-amino acid + a tRNA + H(+). Hydrolyzes ribosome-free peptidyl-tRNAs (with 1 or more amino acids incorporated), which drop off the ribosome during protein synthesis, or as a result of ribosome stalling. In terms of biological role, catalyzes the release of premature peptidyl moieties from peptidyl-tRNA molecules trapped in stalled 50S ribosomal subunits, and thus maintains levels of free tRNAs and 50S ribosomes. The protein is Peptidyl-tRNA hydrolase of Haemophilus influenzae (strain 86-028NP).